A 232-amino-acid polypeptide reads, in one-letter code: Ribose-5-phosphate isomerase A (232 aa).

Substrate contacts are provided by residues S29–T32, D86–D89, and K99–G102. E108 (proton acceptor) is an active-site residue. Residue K126 participates in substrate binding.

Belongs to the ribose 5-phosphate isomerase family. As to quaternary structure, homodimer.

The enzyme catalyses aldehydo-D-ribose 5-phosphate = D-ribulose 5-phosphate. Its pathway is carbohydrate degradation; pentose phosphate pathway; D-ribose 5-phosphate from D-ribulose 5-phosphate (non-oxidative stage): step 1/1. In terms of biological role, catalyzes the reversible conversion of ribose-5-phosphate to ribulose 5-phosphate. The sequence is that of Ribose-5-phosphate isomerase A from Synechococcus sp. (strain ATCC 27144 / PCC 6301 / SAUG 1402/1) (Anacystis nidulans).